We begin with the raw amino-acid sequence, 602 residues long: Aspartate--tRNA(Asp/Asn) ligase (602 aa).

An L-aspartate-binding site is contributed by glutamate 170. The interval 194-197 (QLFK) is aspartate. Residue arginine 216 participates in L-aspartate binding. ATP-binding positions include 216-218 (RDE) and glutamine 225. An L-aspartate-binding site is contributed by histidine 448. ATP is bound at residue glutamate 482. Residue arginine 489 coordinates L-aspartate. 534 to 537 (GWDR) lines the ATP pocket. Positions 559–602 (GGVDPLTDAPAPISAQQRKESGIDAKPEKKSEDKKSEGDTAEAK) are disordered. The span at 575-602 (QRKESGIDAKPEKKSEDKKSEGDTAEAK) shows a compositional bias: basic and acidic residues.

Belongs to the class-II aminoacyl-tRNA synthetase family. Type 1 subfamily. As to quaternary structure, homodimer.

It localises to the cytoplasm. The catalysed reaction is tRNA(Asx) + L-aspartate + ATP = L-aspartyl-tRNA(Asx) + AMP + diphosphate. Aspartyl-tRNA synthetase with relaxed tRNA specificity since it is able to aspartylate not only its cognate tRNA(Asp) but also tRNA(Asn). Reaction proceeds in two steps: L-aspartate is first activated by ATP to form Asp-AMP and then transferred to the acceptor end of tRNA(Asp/Asn). This Rhodococcus erythropolis (strain PR4 / NBRC 100887) protein is Aspartate--tRNA(Asp/Asn) ligase.